The following is a 304-amino-acid chain: Xylanase inhibitor protein 1 (304 aa).

An N-terminal signal peptide occupies residues 1-30; that stretch reads MAPLAARRPACLLALLSVAAALFLTPTALA. The GH18 domain occupies 36–304; it reads GQVTVFWGRN…NYSSLIKYYA (269 aa). A disulfide bridge links Cys55 with Cys96. N-linked (GlcNAc...) asparagine glycosylation occurs at Asn119. The Proton donor role is filled by Glu158. Positions 178 to 184 are interaction with fungal GH11 xylanase; sequence IRGGPGK. Cys194 and Cys225 are oxidised to a cystine. The segment at 262–275 is interaction with fungal GH10 xylanase; sequence HPKNVYYGVAPVAQ. An N-linked (GlcNAc...) asparagine glycan is attached at Asn295.

The protein belongs to the glycosyl hydrolase 18 family. Xylanase inhibitor subfamily. As to quaternary structure, binds to fungal GH10 and GH11 xylanases. Also forms a ternary complex with barley alpha-amylase 1 (AMY1) and insoluble starch.

It is found in the secreted. Functionally, fungal xylanase inhibitor. Possesses competitive inhibiting activity against fungal endo-1,4-beta-D-xylanases belonging to glycoside hydrolase family 10 (GH10) and family 11 (GH11). Possesses also inhibitory activity towards barley alpha-amylases. Binding to xylanases or amylases is necessary for inhibition activity. May function in plant defense against secreted fungal pathogen xylanases. Is similar to class III chitinases, but does not exhibit chitinase activity. This chain is Xylanase inhibitor protein 1, found in Triticum aestivum (Wheat).